A 342-amino-acid chain; its full sequence is Anthranilate phosphoribosyltransferase (342 aa).

5-phospho-alpha-D-ribose 1-diphosphate is bound by residues glycine 84, 87-88 (GD), threonine 92, 94-97 (NITT), 112-120 (KHGNRSVSS), and serine 124. Glycine 84 contributes to the anthranilate binding site. Threonine 96 is a binding site for Mg(2+). Asparagine 115 lines the anthranilate pocket. Residue arginine 170 coordinates anthranilate. Residues aspartate 228 and glutamate 229 each contribute to the Mg(2+) site.

It belongs to the anthranilate phosphoribosyltransferase family. In terms of assembly, homodimer. Mg(2+) is required as a cofactor.

It catalyses the reaction N-(5-phospho-beta-D-ribosyl)anthranilate + diphosphate = 5-phospho-alpha-D-ribose 1-diphosphate + anthranilate. The protein operates within amino-acid biosynthesis; L-tryptophan biosynthesis; L-tryptophan from chorismate: step 2/5. In terms of biological role, catalyzes the transfer of the phosphoribosyl group of 5-phosphorylribose-1-pyrophosphate (PRPP) to anthranilate to yield N-(5'-phosphoribosyl)-anthranilate (PRA). This chain is Anthranilate phosphoribosyltransferase, found in Corynebacterium efficiens (strain DSM 44549 / YS-314 / AJ 12310 / JCM 11189 / NBRC 100395).